The primary structure comprises 254 residues: Small ribosomal subunit protein uS2 (254 aa).

The protein belongs to the universal ribosomal protein uS2 family.

This is Small ribosomal subunit protein uS2 from Legionella pneumophila subsp. pneumophila (strain Philadelphia 1 / ATCC 33152 / DSM 7513).